The sequence spans 537 residues: CTP synthase (537 aa).

The tract at residues methionine 1 to isoleucine 265 is amidoligase domain. Serine 13 is a binding site for CTP. Residue serine 13 participates in UTP binding. Residues serine 14 to leucine 19 and aspartate 71 each bind ATP. Mg(2+) contacts are provided by aspartate 71 and glutamate 139. CTP-binding positions include aspartate 146–glutamate 148 and lysine 222. Lysine 222 is a UTP binding site. The 247-residue stretch at arginine 290 to cysteine 536 folds into the Glutamine amidotransferase type-1 domain. Residue glycine 352 participates in L-glutamine binding. Residue cysteine 379 is the Nucleophile; for glutamine hydrolysis of the active site. Residues phenylalanine 380–glutamine 383, glutamate 403, and arginine 464 each bind L-glutamine. Catalysis depends on residues histidine 509 and glutamate 511.

The protein belongs to the CTP synthase family. Homotetramer.

The enzyme catalyses UTP + L-glutamine + ATP + H2O = CTP + L-glutamate + ADP + phosphate + 2 H(+). It catalyses the reaction L-glutamine + H2O = L-glutamate + NH4(+). The catalysed reaction is UTP + NH4(+) + ATP = CTP + ADP + phosphate + 2 H(+). It participates in pyrimidine metabolism; CTP biosynthesis via de novo pathway; CTP from UDP: step 2/2. Allosterically activated by GTP, when glutamine is the substrate; GTP has no effect on the reaction when ammonia is the substrate. The allosteric effector GTP functions by stabilizing the protein conformation that binds the tetrahedral intermediate(s) formed during glutamine hydrolysis. Inhibited by the product CTP, via allosteric rather than competitive inhibition. In terms of biological role, catalyzes the ATP-dependent amination of UTP to CTP with either L-glutamine or ammonia as the source of nitrogen. Regulates intracellular CTP levels through interactions with the four ribonucleotide triphosphates. The chain is CTP synthase from Rickettsia conorii (strain ATCC VR-613 / Malish 7).